The primary structure comprises 620 residues: Endoglucanase 6 (620 aa).

The N-terminal stretch at 1–22 (MEKFAPVAALLLLLLCFPVAFS) is a signal peptide. The active-site Nucleophile is the Asp-78. Residues His-411, Asp-463, and Glu-472 contribute to the active site. 2 N-linked (GlcNAc...) asparagine glycosylation sites follow: Asn-554 and Asn-564.

Belongs to the glycosyl hydrolase 9 (cellulase E) family.

It localises to the secreted. The enzyme catalyses Endohydrolysis of (1-&gt;4)-beta-D-glucosidic linkages in cellulose, lichenin and cereal beta-D-glucans.. This is Endoglucanase 6 from Arabidopsis thaliana (Mouse-ear cress).